The sequence spans 200 residues: WUSCHEL-related homeobox 9 (200 aa).

Positions 10-74 (VKCGRWNPTA…NHKARERHHH (65 aa)) form a DNA-binding region, homeobox; WUS-type. Basic residues predominate over residues 70–80 (ERHHHKKRRRG). The tract at residues 70 to 118 (ERHHHKKRRRGASSPDSGSNDDDGRAAAHEGDADLVLQPPESKREARSY) is disordered. Over residues 91 to 101 (DDGRAAAHEGD) the composition is skewed to basic and acidic residues.

This sequence belongs to the WUS homeobox family. In terms of tissue distribution, specifically expressed in the central cells of the quiescent center (QC) of the root.

It is found in the nucleus. Transcription factor which may be involved in the specification and maintenance of the stem cells (QC cells) in the root apical meristem (RAM). In Oryza sativa subsp. japonica (Rice), this protein is WUSCHEL-related homeobox 9 (WOX9).